Here is a 668-residue protein sequence, read N- to C-terminus: UvrABC system protein C (668 aa).

One can recognise a GIY-YIG domain in the interval 14–91 (DSPGCYLHKD…IQRYKPKYNI (78 aa)). Positions 196–231 (KKIVNELEAKMMVSSDNMEFEQAAEYRDVIKAIGTL) constitute a UVR domain.

Belongs to the UvrC family. As to quaternary structure, interacts with UvrB in an incision complex.

The protein localises to the cytoplasm. The UvrABC repair system catalyzes the recognition and processing of DNA lesions. UvrC both incises the 5' and 3' sides of the lesion. The N-terminal half is responsible for the 3' incision and the C-terminal half is responsible for the 5' incision. The sequence is that of UvrABC system protein C from Lactococcus lactis subsp. lactis (strain IL1403) (Streptococcus lactis).